Here is a 391-residue protein sequence, read N- to C-terminus: Formate-dependent phosphoribosylglycinamide formyltransferase (391 aa).

Residues 18–19 (EL) and glutamate 78 contribute to the N(1)-(5-phospho-beta-D-ribosyl)glycinamide site. Residues arginine 110, lysine 151, 156 to 161 (SSGKGQ), 191 to 194 (EEFI), and glutamate 199 contribute to the ATP site. In terms of domain architecture, ATP-grasp spans 115–305 (ELVSRDLKIK…EFELHLRAFL (191 aa)). Mg(2+)-binding residues include glutamate 264 and glutamate 276. Residues aspartate 283, lysine 353, and 360 to 361 (RR) contribute to the N(1)-(5-phospho-beta-D-ribosyl)glycinamide site.

This sequence belongs to the PurK/PurT family. Homodimer.

It catalyses the reaction N(1)-(5-phospho-beta-D-ribosyl)glycinamide + formate + ATP = N(2)-formyl-N(1)-(5-phospho-beta-D-ribosyl)glycinamide + ADP + phosphate + H(+). It functions in the pathway purine metabolism; IMP biosynthesis via de novo pathway; N(2)-formyl-N(1)-(5-phospho-D-ribosyl)glycinamide from N(1)-(5-phospho-D-ribosyl)glycinamide (formate route): step 1/1. Its function is as follows. Involved in the de novo purine biosynthesis. Catalyzes the transfer of formate to 5-phospho-ribosyl-glycinamide (GAR), producing 5-phospho-ribosyl-N-formylglycinamide (FGAR). Formate is provided by PurU via hydrolysis of 10-formyl-tetrahydrofolate. This is Formate-dependent phosphoribosylglycinamide formyltransferase from Prochlorococcus marinus (strain MIT 9312).